A 139-amino-acid chain; its full sequence is ATP synthase epsilon chain 2 (139 aa).

It belongs to the ATPase epsilon chain family. As to quaternary structure, F-type ATPases have 2 components, CF(1) - the catalytic core - and CF(0) - the membrane proton channel. CF(1) has five subunits: alpha(3), beta(3), gamma(1), delta(1), epsilon(1). CF(0) has three main subunits: a, b and c.

It localises to the cell inner membrane. Its function is as follows. Produces ATP from ADP in the presence of a proton gradient across the membrane. In Ralstonia nicotianae (strain ATCC BAA-1114 / GMI1000) (Ralstonia solanacearum), this protein is ATP synthase epsilon chain 2 (atpC2).